The following is a 312-amino-acid chain: Aspartate carbamoyltransferase catalytic subunit (312 aa).

Carbamoyl phosphate is bound by residues Arg62 and Thr63. Lys90 contacts L-aspartate. 3 residues coordinate carbamoyl phosphate: Arg112, His140, and Gln143. L-aspartate is bound by residues Arg173 and Arg228. The carbamoyl phosphate site is built by Gly269 and Pro270.

Belongs to the aspartate/ornithine carbamoyltransferase superfamily. ATCase family. As to quaternary structure, heterododecamer (2C3:3R2) of six catalytic PyrB chains organized as two trimers (C3), and six regulatory PyrI chains organized as three dimers (R2).

The enzyme catalyses carbamoyl phosphate + L-aspartate = N-carbamoyl-L-aspartate + phosphate + H(+). The protein operates within pyrimidine metabolism; UMP biosynthesis via de novo pathway; (S)-dihydroorotate from bicarbonate: step 2/3. Catalyzes the condensation of carbamoyl phosphate and aspartate to form carbamoyl aspartate and inorganic phosphate, the committed step in the de novo pyrimidine nucleotide biosynthesis pathway. The chain is Aspartate carbamoyltransferase catalytic subunit from Deinococcus geothermalis (strain DSM 11300 / CIP 105573 / AG-3a).